Here is a 127-residue protein sequence, read N- to C-terminus: Small ribosomal subunit protein uS11 (127 aa).

This sequence belongs to the universal ribosomal protein uS11 family. In terms of assembly, part of the 30S ribosomal subunit. Interacts with proteins S7 and S18. Binds to IF-3.

Functionally, located on the platform of the 30S subunit, it bridges several disparate RNA helices of the 16S rRNA. Forms part of the Shine-Dalgarno cleft in the 70S ribosome. The protein is Small ribosomal subunit protein uS11 of Rickettsia prowazekii (strain Madrid E).